Here is a 128-residue protein sequence, read N- to C-terminus: Aspartate 1-decarboxylase (128 aa).

Ser25 (schiff-base intermediate with substrate; via pyruvic acid) is an active-site residue. Ser25 is subject to Pyruvic acid (Ser). Thr57 contributes to the substrate binding site. Tyr58 functions as the Proton donor in the catalytic mechanism. Residue Gly73 to Ala75 participates in substrate binding.

The protein belongs to the PanD family. In terms of assembly, heterooctamer of four alpha and four beta subunits. The cofactor is pyruvate. Is synthesized initially as an inactive proenzyme, which is activated by self-cleavage at a specific serine bond to produce a beta-subunit with a hydroxyl group at its C-terminus and an alpha-subunit with a pyruvoyl group at its N-terminus.

It is found in the cytoplasm. It carries out the reaction L-aspartate + H(+) = beta-alanine + CO2. It functions in the pathway cofactor biosynthesis; (R)-pantothenate biosynthesis; beta-alanine from L-aspartate: step 1/1. Functionally, catalyzes the pyruvoyl-dependent decarboxylation of aspartate to produce beta-alanine. The sequence is that of Aspartate 1-decarboxylase from Caldicellulosiruptor saccharolyticus (strain ATCC 43494 / DSM 8903 / Tp8T 6331).